A 202-amino-acid chain; its full sequence is uncharacterized protein (202 aa).

The helical transmembrane segment at 175-195 (INTGIALFIILTSLLVYFIQF) threads the bilayer.

It is found in the membrane. This is an uncharacterized protein from Dictyostelium discoideum (Social amoeba).